A 455-amino-acid polypeptide reads, in one-letter code: Cysteine--tRNA ligase (455 aa).

C28 is a binding site for Zn(2+). The short motif at 30–40 (MTVYDYCHLGH) is the 'HIGH' region element. Positions 209, 234, and 238 each coordinate Zn(2+). The short motif at 266-270 (KMSKS) is the 'KMSKS' region element. Residue K269 participates in ATP binding.

It belongs to the class-I aminoacyl-tRNA synthetase family. In terms of assembly, monomer. Requires Zn(2+) as cofactor.

It localises to the cytoplasm. The enzyme catalyses tRNA(Cys) + L-cysteine + ATP = L-cysteinyl-tRNA(Cys) + AMP + diphosphate. This chain is Cysteine--tRNA ligase, found in Methylobacillus flagellatus (strain ATCC 51484 / DSM 6875 / VKM B-1610 / KT).